Here is a 95-residue protein sequence, read N- to C-terminus: Small ribosomal subunit protein bS16 (95 aa).

The protein belongs to the bacterial ribosomal protein bS16 family.

The chain is Small ribosomal subunit protein bS16 from Mycoplasma genitalium (strain ATCC 33530 / DSM 19775 / NCTC 10195 / G37) (Mycoplasmoides genitalium).